A 251-amino-acid polypeptide reads, in one-letter code: Putative ATP-binding protein Rv3427c in insertion sequence (251 aa).

An ATP-binding site is contributed by 108 to 115 (GPVGVGKT).

It belongs to the IS21/IS1162 putative ATP-binding protein family.

The chain is Putative ATP-binding protein Rv3427c in insertion sequence from Mycobacterium tuberculosis (strain ATCC 25618 / H37Rv).